The sequence spans 190 residues: Elongation factor P (190 aa).

Residue K34 is modified to N6-(3,6-diaminohexanoyl)-5-hydroxylysine.

The protein belongs to the elongation factor P family. May be beta-lysylated on the epsilon-amino group of Lys-34 by the combined action of EpmA and EpmB, and then hydroxylated on the C5 position of the same residue by EpmC (if this protein is present). Lysylation is critical for the stimulatory effect of EF-P on peptide-bond formation. The lysylation moiety may extend toward the peptidyltransferase center and stabilize the terminal 3-CCA end of the tRNA. Hydroxylation of the C5 position on Lys-34 may allow additional potential stabilizing hydrogen-bond interactions with the P-tRNA.

It is found in the cytoplasm. The protein operates within protein biosynthesis; polypeptide chain elongation. Involved in peptide bond synthesis. Alleviates ribosome stalling that occurs when 3 or more consecutive Pro residues or the sequence PPG is present in a protein, possibly by augmenting the peptidyl transferase activity of the ribosome. Modification of Lys-34 is required for alleviation. This Psychrobacter cryohalolentis (strain ATCC BAA-1226 / DSM 17306 / VKM B-2378 / K5) protein is Elongation factor P.